The primary structure comprises 512 residues: Bifunctional pantoate ligase/cytidylate kinase (512 aa).

A pantoate--beta-alanine ligase region spans residues 1–276; sequence MKLQTSADLQ…CGEARLIDHR (276 aa). 27–34 contacts ATP; that stretch reads MGALHQGH. Residue H34 is the Proton donor of the active site. Q58 contributes to the (R)-pantoate binding site. Q58 serves as a coordination point for beta-alanine. Position 147–150 (147–150) interacts with ATP; that stretch reads GEKD. Residue Q153 participates in (R)-pantoate binding. ATP is bound by residues L176 and 184-187; that span reads LSSR. Residues 277–512 are cytidylate kinase; the sequence is VLMSRLPILA…VPVEALNADA (236 aa).

It in the N-terminal section; belongs to the pantothenate synthetase family. This sequence in the C-terminal section; belongs to the cytidylate kinase family. Type 1 subfamily.

Its subcellular location is the cytoplasm. It carries out the reaction (R)-pantoate + beta-alanine + ATP = (R)-pantothenate + AMP + diphosphate + H(+). The enzyme catalyses CMP + ATP = CDP + ADP. The catalysed reaction is dCMP + ATP = dCDP + ADP. Its pathway is cofactor biosynthesis; (R)-pantothenate biosynthesis; (R)-pantothenate from (R)-pantoate and beta-alanine: step 1/1. Functionally, catalyzes the condensation of pantoate with beta-alanine in an ATP-dependent reaction via a pantoyl-adenylate intermediate. In terms of biological role, catalyzes the transfer of a phosphate group from ATP to either CMP or dCMP to form CDP or dCDP and ADP, respectively. The sequence is that of Bifunctional pantoate ligase/cytidylate kinase from Synechococcus sp. (strain RCC307).